Consider the following 709-residue polypeptide: Fatty acid oxidation complex subunit alpha (709 aa).

Positions 1–188 are enoyl-CoA hydratase; that stretch reads MEKTFNLTRR…KMGLVNDVVP (188 aa). The segment at 308–709 is 3-hydroxyacyl-CoA dehydrogenase; the sequence is RKVKKAVILG…EMAAEKTRFF (402 aa).

It in the N-terminal section; belongs to the enoyl-CoA hydratase/isomerase family. This sequence in the central section; belongs to the 3-hydroxyacyl-CoA dehydrogenase family. In terms of assembly, heterotetramer of two alpha chains (FadJ) and two beta chains (FadI).

It is found in the cytoplasm. The catalysed reaction is a (3S)-3-hydroxyacyl-CoA = a (2E)-enoyl-CoA + H2O. It carries out the reaction a 4-saturated-(3S)-3-hydroxyacyl-CoA = a (3E)-enoyl-CoA + H2O. The enzyme catalyses a (3S)-3-hydroxyacyl-CoA + NAD(+) = a 3-oxoacyl-CoA + NADH + H(+). It catalyses the reaction (3S)-3-hydroxybutanoyl-CoA = (3R)-3-hydroxybutanoyl-CoA. The protein operates within lipid metabolism; fatty acid beta-oxidation. Functionally, catalyzes the formation of a hydroxyacyl-CoA by addition of water on enoyl-CoA. Also exhibits 3-hydroxyacyl-CoA epimerase and 3-hydroxyacyl-CoA dehydrogenase activities. The polypeptide is Fatty acid oxidation complex subunit alpha (Shewanella sp. (strain MR-4)).